Consider the following 370-residue polypeptide: Phospho-N-acetylmuramoyl-pentapeptide-transferase (370 aa).

10 helical membrane-spanning segments follow: residues 31–51 (LTSM…LYGL), 73–93 (TMGG…WGNL), 98–118 (IIVL…DDYM), 135–155 (LLSI…TGVI), 177–197 (GPVL…IIGS), 209–229 (GLAT…AYVS), 251–271 (VFLS…AHPA), 273–293 (VFMG…IVIL), 298–318 (ILLL…ILQV), and 347–367 (KIVI…LSTL).

The protein belongs to the glycosyltransferase 4 family. MraY subfamily. Requires Mg(2+) as cofactor.

It localises to the cell inner membrane. It carries out the reaction UDP-N-acetyl-alpha-D-muramoyl-L-alanyl-gamma-D-glutamyl-meso-2,6-diaminopimeloyl-D-alanyl-D-alanine + di-trans,octa-cis-undecaprenyl phosphate = di-trans,octa-cis-undecaprenyl diphospho-N-acetyl-alpha-D-muramoyl-L-alanyl-D-glutamyl-meso-2,6-diaminopimeloyl-D-alanyl-D-alanine + UMP. The protein operates within cell wall biogenesis; peptidoglycan biosynthesis. Functionally, catalyzes the initial step of the lipid cycle reactions in the biosynthesis of the cell wall peptidoglycan: transfers peptidoglycan precursor phospho-MurNAc-pentapeptide from UDP-MurNAc-pentapeptide onto the lipid carrier undecaprenyl phosphate, yielding undecaprenyl-pyrophosphoryl-MurNAc-pentapeptide, known as lipid I. In Leptospira borgpetersenii serovar Hardjo-bovis (strain JB197), this protein is Phospho-N-acetylmuramoyl-pentapeptide-transferase.